Consider the following 205-residue polypeptide: MILSVLSSLALVSGLMVVRAKNPVHSVLFFILVFCDTSGLLLLLGLDFFAMIFLVVYIGAIAVLFLFVVMMFHIQIAEIHEEVLRYLPVSGIIGLIFWWEMFFILDNESIPLLPTQRNTTSLRYTVYAGKVRSWTNLETLGNLLYTYYFVWFLVSSLILLVAMIGAIVLTMHRTTKVKRQDVFRRNAIDFRRTIMRRTTDPLTIY.

3 consecutive transmembrane segments (helical) span residues 48–68 (FFAMIFLVVYIGAIAVLFLFV), 86–106 (YLPVSGIIGLIFWWEMFFILD), and 150–170 (VWFLVSSLILLVAMIGAIVLT).

This sequence belongs to the complex I subunit 6 family. In terms of assembly, complex I is composed of at least 49 different subunits.

It is found in the mitochondrion membrane. The enzyme catalyses a ubiquinone + NADH + 5 H(+)(in) = a ubiquinol + NAD(+) + 4 H(+)(out). Core subunit of the mitochondrial membrane respiratory chain NADH dehydrogenase (Complex I) that is believed to belong to the minimal assembly required for catalysis. Complex I functions in the transfer of electrons from NADH to the respiratory chain. The immediate electron acceptor for the enzyme is believed to be ubiquinone. The chain is NADH-ubiquinone oxidoreductase chain 6 (ND6) from Arabidopsis thaliana (Mouse-ear cress).